A 232-amino-acid polypeptide reads, in one-letter code: Acyl-protein thioesterase 1 (232 aa).

Residues Ser-125, Asp-179, and His-212 each act as charge relay system in the active site.

This sequence belongs to the AB hydrolase superfamily. AB hydrolase 2 family.

The protein resides in the cytoplasm. It is found in the nucleus. The catalysed reaction is S-hexadecanoyl-L-cysteinyl-[protein] + H2O = L-cysteinyl-[protein] + hexadecanoate + H(+). Hydrolyzes fatty acids from S-acylated cysteine residues in proteins with a strong preference for palmitoylated G-alpha proteins over other acyl substrates. Mediates the deacylation of G-alpha proteins such as GPA1 in vivo, but has weak or no activity toward palmitoylated Ras proteins. Has weak lysophospholipase activity in vitro; however such activity may not exist in vivo. The protein is Acyl-protein thioesterase 1 of Debaryomyces hansenii (strain ATCC 36239 / CBS 767 / BCRC 21394 / JCM 1990 / NBRC 0083 / IGC 2968) (Yeast).